We begin with the raw amino-acid sequence, 1212 residues long: DNA-directed RNA polymerase subunit beta (1212 aa).

Positions 1176-1195 (QQEKKKLAEEAAKKDDKSAE) are enriched in basic and acidic residues. A disordered region spans residues 1176 to 1212 (QQEKKKLAEEAAKKDDKSAEPVDQSDSSTSSDDKVSK).

The protein belongs to the RNA polymerase beta chain family. The RNAP catalytic core consists of 2 alpha, 1 beta, 1 beta' and 1 omega subunit. When a sigma factor is associated with the core the holoenzyme is formed, which can initiate transcription.

It catalyses the reaction RNA(n) + a ribonucleoside 5'-triphosphate = RNA(n+1) + diphosphate. Functionally, DNA-dependent RNA polymerase catalyzes the transcription of DNA into RNA using the four ribonucleoside triphosphates as substrates. The protein is DNA-directed RNA polymerase subunit beta of Lactobacillus gasseri (strain ATCC 33323 / DSM 20243 / BCRC 14619 / CIP 102991 / JCM 1131 / KCTC 3163 / NCIMB 11718 / NCTC 13722 / AM63).